The following is a 49-amino-acid chain: Large ribosomal subunit protein eL40 (49 aa).

Belongs to the eukaryotic ribosomal protein eL40 family.

This chain is Large ribosomal subunit protein eL40, found in Methanococcoides burtonii (strain DSM 6242 / NBRC 107633 / OCM 468 / ACE-M).